A 3625-amino-acid chain; its full sequence is MTKDDKTLDYLKRLTAELVQTRERLRTAQAASREPVAVVSMACRFPGGVSSPEELWRLVAAGRDGITPIPAGRGWDTEGLYDPDPDRVGKSYAREGGFLDDIASFDAGLFGISPREALVMDPQQRLLLEVSRETLERAGIAPGTLGGSRTGVFTGLMGGDYTARLPGILGEFEGQLEIGRAGSVASGRVAYTFGLEGPALTLDTACSSSLVALHLAVRALRDGECDLALAGGATLMSSPAALLEFSRQRALSPDGRCKAFAGQADGTGLAEGVGVVLLERLTDARRNGHPVLAVVRGSAVNQDGASNGLTAPNGPAQQRVIRAALANAGLTAAEVDAVEAHGTGTTLGDPIEAQALLATYGRRRDPQQPLWLGSLKSNIGHTQAAAGIAGVIKTVMALGAGQLPPTLHIDHPTPHVDWSEGTVRLLTEARPWPDTGRPRRVGVSSFGISGTNAHVILEQAEQPPAEDNPSRPLSPVPWVLSAQTPRALRAQAARLRDHLADAPVPHPADIAYSLAVTRDALRHRAVVVGRDPGELLRGVSALADGEPAPGLVEGEAREVGRTVLVFPGQGSQWAGMAQPLWRHSTVFRERMEACAEALAPHVDWSLREMVDAPAEDARWDRVDVVQPVLWAVMVSLAGLWRSHGVEPAAVVGHSQGEIAAACVAGALSLEDGARVVALRSRLVAERLAGKGGMVSVAAPVAEAEDRLARRPGRLALAAVNGPSSVVVSGDPAALEELLADCARDGIRARRVAVDYASHSPQVAALREELLAALAPIRPRAGEIPLYSTVTGGPLAGERLTGEHWYRNLRQTVRLAGTVRTLAAAGHSVFVECSPHPVLTPGLTETLTGLDEDALVVGTLRRDDGGPERFLCSLGELFAGGRAPDWERVFTGTGARRVALPTYAFERRRHWLDAVRPQGDPVPAGLSPLDHPWWGAVTELPEDEGWLLTGRLSRESSPWLGEHTVDGNVLLPGTAFLELALQAAEEAGCAGVAELTLQAPLLLPARGGIRLCAVVGAAGADGTHPLTLHARPEDAPDAPWTRQATGTLTRTARPAEPMPEDWPPPGADPLPVDRIYGELAALSLEYGPAFRGLRAAWRRGEELFAEVALDESGESQGFALHPALLDAALHPVAADEDADGPRLPFSWTGVTLHAVGANRLRVRIGPAGPDAVTLEAADGTGAPVAFVESLAVRPLTPGSGAPAAVTPADSLFAVDWTPAPAAPSATSRTWAVLDGAESLAPAIEAAGCEVLRRPDLTAAIAAPGLPDAMPAARDLGLGERSDAAPGLPDAMLAARDAAPGELSAAVPEPPDVVLAALDPGRGELPAAAREVTGRALALAQRWLAEDGPSRLVLLTRGAVAATGTETADPALAAAWGLLRSAQSEHPDRLVLVDWDGQPSSAAALPAAVSGDEPQLALRGGRILAPRLRRLPVTRPAPQAFDAEGTVLVTGAAGVLGRVITRHLVRTHGVRRLLLVSRRGPEAPGAAELTAELGELGASVRWTACDVADRAALADVLARIPARHPLRAVVHAGGLLDDGVVSALAPDRLETVFRPKIDAVVNLHELTSDLTAFVLFSSAAGTFGTAGQGGYAAANAFLDAFAGLRRSQGLPALSLAWGLWAETSALTARMSDTDRDRMHRSGVTGLSGAEGTALFDAALAAGPPMVLPTRLDLAAVRARAAAEGVPALLRALVKPPARRAGTATESGSALARELAALAPQDRAGAVLETVRAQAAAVLGHTGTAEVEPQRAFKELGFDSLTGVELRNRLARVTGLRLPATLVFDHPTPHSLAAHLLGRLTGGQRPRSTAPHAPARPDEPIAIIGMACRFPGGIASPEDLWRLLERGGDAISAFPADRGWDLDPAEYTAEGGFLREAARFDPEFFGISPREAVAMDPQQRLLLEITWEALERAGLDPTALRGSRTGVFAGLMYHDYTVRHAAAPGEAAGYLGTGGSGSVASGRIAYTFGFEGPAVTVDTACSSSLVALHLAAQSVRAGDCELALAGGVTVMCTPSAFTEFSRQGALAADARCKPFAAAADGTVWGEGAGVLLVERLSEAQRQGHRVLAVLRGSAVNQDGASNGLTAPNGPSQERVIRHALATARLRARDVDAVEAHGTGTTLGDPIEAQALLATYGQDRPAGRPLWLGSVKSNLGHPQAAAGVAGVIKVVLALRQGVLPRTLHVDRPTPQVDWSQGAVELLTEARPWPETGRPRRAAVSSFGISGTNAHVVLEQAPAPAEHDPQPAAVPGPLPLVLSARGEPALRAQAAGLRERLTADPGLQLADVAGSLLTTRAALEHRAVVLGDGRAELLAGLAALAHGRETPAVVRGTACAPGKTVFVFPGQGAQWPGMAAELWESSPVFRKRLGECAEALAPWVDFDAVEVVRGTATGIDPERVDVVQPALWAVMVALAGLWRSYGVEPAAVVGHSQGEIAAACVAGGLTLADGARVVALRSRALTALAGRGGMLSLALTPAEAGKLVAGRGDDRLSLAAVNGPESVVVSGDTDALEEVLAHCERTGVWARRIPVDYASHSPQVAEVRAHIQRDLAELRPRTGQVAFFSTVTGRFEDTAGLDGDYWYRNLREPVRFEPAVRELAGLGFGAFVETSPHPVLTTAVGEALAGRPGPPPVVVGSLRRGQGGPLRFLASVAEAHTRGIAVDWSTLWAGRTPRVVDLPTYPFQRRRFWLPAPAASGEVTAAGLGRAEHPLLGARMELADPPETVLTARWSLDTHPWIADHTVADTVIVPGTAFLELALLAGAETGCPQVRELIQQAPLVLAERGAARLQMRIAPPAEDGTRALAIHSRPEDASPEEPWLCHARGLLSEEEPATPPALDGSWPPPGAEPIELVGFYQHLDEIGLGYGPAFRGLRAAWRLGEEILAEAALPEPQQDETAGYRAHPALLDAALHSCLLRGRGERPEAAAMPFAWNDVACHADCGPAVRVRVTPGAGQEVSVVVADVQGSPAVTIRSLAARPVPAGQLRAAGGRSGSLFHLTWTPAPTDTGASPGAWAVLGEDDPGLALPYFPGLPALWAAYDGGATAPELVLAPLAGGPGDGPERSRELTCRALELLQSWLADDRTETRRLVIVTRGAVTASDDDPPPDPAAAAVWGLVRSAQSEHPGRFLLADLDRHPDSAPALTAALATALALDEPQLALRAGRVLLPRIQRAPAAQEGTPPWDPQGTVLITGASGTLGRAVARHLVTTHGVRRLLLVGRHGGAGEEAARLTTELAGHQATVDWAACDAADREAIAAVLASIPAAHPLTAVIHAAGVLDDGVLPALSPQRIDAVFRPKADAARHLDALTRTASPPALVVFSSAAATLGSAGQANYAAANAFLDALILARRRAGFPGQSLAWGLWSETSEMTAALGQAGRARLARSGLQGMPTEEALALLDTALATDRPLLLPMRLDPPALREGAGPLPPVLRGLVRAPARRGGPGRAEDAAALRRRLAALTPAERDRQLTDLVRAQAATVLGHPGAEAVGRDRAFKELGFDSLTAVELRNRLSTATGLRLPPTLVFDHPTPAALAGHLSTRLAPDDDPPDAPHDSEREVRRALAAIPLTRLRDAGLLDALLELAGRPAAGAAPPDDGEPGSIDRLDAEGLLAMALNNQAHAETEDHDAGW.

The region spanning 33–459 is the Ketosynthase family 3 (KS3) 1 domain; sequence REPVAVVSMA…GTNAHVILEQ (427 aa). Residues cysteine 206, histidine 341, and histidine 381 each act as for beta-ketoacyl synthase 1 activity in the active site. In terms of domain architecture, Malonyl-CoA:ACP transacylase (MAT) 1 spans 564 to 881; that stretch reads LVFPGQGSQW…SLGELFAGGR (318 aa). The N-terminal hotdog fold 1 stretch occupies residues 930–1054; that stretch reads HPWWGAVTEL…GTLTRTARPA (125 aa). In terms of domain architecture, PKS/mFAS DH 1 spans 930–1200; it reads HPWWGAVTEL…VRPLTPGSGA (271 aa). The Proton acceptor; for dehydratase activity 1 role is filled by histidine 962. A C-terminal hotdog fold 1 region spans residues 1066–1200; the sequence is ADPLPVDRIY…VRPLTPGSGA (135 aa). The active-site Proton donor; for dehydratase activity 1 is the aspartate 1125. Residues 1443 to 1620 enclose the Ketoreductase (KR) 1 domain; it reads GTVLVTGAAG…LSLAWGLWAE (178 aa). The region spanning 1722–1797 is the Carrier 1 domain; that stretch reads GAVLETVRAQ…SLAAHLLGRL (76 aa). Serine 1757 bears the O-(pantetheine 4'-phosphoryl)serine mark. Residues 1815-2231 enclose the Ketosynthase family 3 (KS3) 2 domain; sequence DEPIAIIGMA…GTNAHVVLEQ (417 aa). Residues cysteine 1978, histidine 2113, and histidine 2153 each act as for beta-ketoacyl synthase 2 activity in the active site. Residues 2336-2656 enclose the Malonyl-CoA:ACP transacylase (MAT) 2 domain; the sequence is VFVFPGQGAQ…VAEAHTRGIA (321 aa). The interval 2704–2829 is N-terminal hotdog fold 2; the sequence is HPLLGARMEL…GLLSEEEPAT (126 aa). A PKS/mFAS DH 2 domain is found at 2704-2981; that stretch reads HPLLGARMEL…ARPVPAGQLR (278 aa). The active-site Proton acceptor; for dehydratase activity 2 is the histidine 2736. The segment at 2842-2981 is C-terminal hotdog fold 2; sequence AEPIELVGFY…ARPVPAGQLR (140 aa). Aspartate 2903 acts as the Proton donor; for dehydratase activity 2 in catalysis. Residues 3182–3361 enclose the Ketoreductase (KR) 2 domain; the sequence is GTVLITGASG…QSLAWGLWSE (180 aa). One can recognise a Carrier 2 domain in the interval 3462 to 3537; that stretch reads RQLTDLVRAQ…ALAGHLSTRL (76 aa). O-(pantetheine 4'-phosphoryl)serine is present on serine 3497.

In terms of assembly, the spectinabilin polyketide synthase complex is composed of 4 proteins, NorA, NorA', NorB and NorC. The complex comprises 6 modules with a total of 28 catalytic domains catalyzing 7 chain elongations. NorA comprises one module, NorA' two modules, NorB one module and NorC two modules. It depends on pantetheine 4'-phosphate as a cofactor.

It carries out the reaction 4-nitrobenzoyl-CoA + 6 (S)-methylmalonyl-CoA + malonyl-CoA + 6 NADPH + 12 H(+) = demethyldeoxyspectinabilin + 7 CO2 + 6 NADP(+) + 8 CoA + 5 H2O. Its pathway is antibiotic biosynthesis. It participates in polyketide biosynthesis. Its function is as follows. Component of a type I modular polyketide synthase (PKS) that generates the backbone of the antibiotic spectinabilin (also known as neoaureothin), a nitroaryl-substituted polyketide metabolite. This PKS system accepts the unusual starter unit 4-nitrobenzoyl-CoA and extends it by 6 molecules of (S)-methylmalonyl-CoA and a single molecule of malonyl-CoA. The sequence is that of Spectinabilin polyketide synthase system protein NorA' from Streptomyces orinoci (Streptoverticillium orinoci).